Consider the following 255-residue polypeptide: Tabinhibitin 1 (255 aa).

The first 23 residues, 1-23 (MTSILVSRFLIAALVLQYATSDA), serve as a signal peptide directing secretion. The region spanning 67–211 (LSKINDVRDH…KARALLTCNF (145 aa)) is the SCP domain.

This sequence belongs to the CRISP family. In terms of tissue distribution, expressed in salivary glands.

It is found in the secreted. In terms of biological role, inhibits platelet aggregation induced by all agonists tested. May act by competing with fibrinogen for binding to glycoprotein IIb/IIIa (ITGA2B/ITGB3). The chain is Tabinhibitin 1 from Tabanus yao (Horsefly).